A 231-amino-acid chain; its full sequence is MNMSQKMAAEFLGTLWLVLGGCGSAVLAAAFPEVGIGLLGVSLAFGLTVLTMAFAIGHISGCHLNPAVSFGLWAGGRFPTSELLPYIIAQVAGGIAGAGVLYLIASGQEGFSLAAGFASNGFGEHSPGGYSMISVMICEIVMTLFFLLVILGSTDERAPKGFAPIAIGLCLTLIHLISIPISNTSVNPARSTGPALFVGDWAVSQLWLFWAAPIIGAILAGVIYRYFNAAK.

A run of 2 helical transmembrane segments spans residues 11 to 31 (FLGTLWLVLGGCGSAVLAAAF) and 36 to 56 (IGLLGVSLAFGLTVLTMAFAI). Residues 65–67 (NPA) carry the NPA 1 motif. A run of 3 helical transmembrane segments spans residues 84–104 (LPYIIAQVAGGIAGAGVLYLI), 132–152 (MISVMICEIVMTLFFLLVILG), and 161–181 (GFAPIAIGLCLTLIHLISIPI). The NPA 2 motif lies at 187–189 (NPA). A helical membrane pass occupies residues 203-223 (VSQLWLFWAAPIIGAILAGVI).

It belongs to the MIP/aquaporin (TC 1.A.8) family. In terms of assembly, homotetramer.

The protein resides in the cell inner membrane. The enzyme catalyses H2O(in) = H2O(out). Channel that permits osmotically driven movement of water in both directions. It is involved in the osmoregulation and in the maintenance of cell turgor during volume expansion in rapidly growing cells. It mediates rapid entry or exit of water in response to abrupt changes in osmolarity. This is Aquaporin Z from Shewanella oneidensis (strain ATCC 700550 / JCM 31522 / CIP 106686 / LMG 19005 / NCIMB 14063 / MR-1).